The primary structure comprises 226 residues: Choline transport system permease protein OpuBD (226 aa).

The region spanning Phe22 to Met202 is the ABC transmembrane type-1 domain. 5 helical membrane-spanning segments follow: residues Leu27 to Ile47, Arg52 to Met72, Leu73 to Leu93, Ala148 to Gly168, and Ala182 to Met202.

The protein belongs to the binding-protein-dependent transport system permease family. CysTW subfamily.

It localises to the cell membrane. In terms of biological role, involved in a high affinity multicomponent binding-protein-dependent transport system for choline; probably responsible for the translocation of the substrate across the membrane. The sequence is that of Choline transport system permease protein OpuBD (opuBD) from Bacillus subtilis (strain 168).